Here is a 102-residue protein sequence, read N- to C-terminus: Co-chaperonin GroES (102 aa).

The protein belongs to the GroES chaperonin family. Heptamer of 7 subunits arranged in a ring. Interacts with the chaperonin GroEL.

It localises to the cytoplasm. Together with the chaperonin GroEL, plays an essential role in assisting protein folding. The GroEL-GroES system forms a nano-cage that allows encapsulation of the non-native substrate proteins and provides a physical environment optimized to promote and accelerate protein folding. GroES binds to the apical surface of the GroEL ring, thereby capping the opening of the GroEL channel. The polypeptide is Co-chaperonin GroES (Chlamydia pneumoniae (Chlamydophila pneumoniae)).